The chain runs to 590 residues: Aspartate--tRNA(Asp/Asn) ligase (590 aa).

Glu-176 contacts L-aspartate. Residues 200-203 are aspartate; sequence QLFK. L-aspartate-binding residues include Arg-222 and His-451. 222–224 contacts ATP; that stretch reads RDE. Glu-485 is a binding site for ATP. Arg-492 provides a ligand contact to L-aspartate. 537-540 provides a ligand contact to ATP; sequence GIDR.

It belongs to the class-II aminoacyl-tRNA synthetase family. Type 1 subfamily. Homodimer.

The protein localises to the cytoplasm. The enzyme catalyses tRNA(Asx) + L-aspartate + ATP = L-aspartyl-tRNA(Asx) + AMP + diphosphate. Functionally, aspartyl-tRNA synthetase with relaxed tRNA specificity since it is able to aspartylate not only its cognate tRNA(Asp) but also tRNA(Asn). Reaction proceeds in two steps: L-aspartate is first activated by ATP to form Asp-AMP and then transferred to the acceptor end of tRNA(Asp/Asn). The protein is Aspartate--tRNA(Asp/Asn) ligase of Ehrlichia ruminantium (strain Welgevonden).